Consider the following 556-residue polypeptide: Valencene synthase (556 aa).

Residues 1 to 12 (MSTQVSASSLAQ) show a composition bias toward polar residues. Positions 1–24 (MSTQVSASSLAQIPQPKNRPVANF) are disordered. Mg(2+)-binding residues include aspartate 310, aspartate 314, and glutamate 462. Positions 310–314 (DDIHD) match the DDXXD motif motif.

Belongs to the terpene synthase family. Tpsa subfamily. It depends on Mg(2+) as a cofactor. In terms of tissue distribution, expressed in flowers and anthers. Detected inside the pollen grains, but not in stems, leaves, tendrils, roots, seeds, pistils or caps.

Its subcellular location is the cytoplasm. The catalysed reaction is (2E,6E)-farnesyl diphosphate = (+)-valencene + diphosphate. The enzyme catalyses (2E,6E)-farnesyl diphosphate = (-)-7-epi-alpha-selinene + diphosphate. It functions in the pathway secondary metabolite biosynthesis; terpenoid biosynthesis. In terms of biological role, involved in the biosynthesis of valencene, a major volatile emitted from flowers of grapevine. Can use farnesyl diphosphate as substrate, but not geranyl diphosphate or geranylgeranyl diphosphate. Produces mainly (+)-valencene and (-)-7-epi-alpha-selinene along with five minor products. In Vitis vinifera (Grape), this protein is Valencene synthase (ValCS).